A 359-amino-acid polypeptide reads, in one-letter code: MDRISITLGERSYAIIIANGLLQDPTSFWPLARGDKVLVVTSNYIASLYLEILSQILTELGIIIDLCILPDGEQYKSLAMIDKIFTALLKKYHNNDTTIIAFGGGVIGDLAGFAAANYLRGVRIIQIPTTLLSQVDSSVGGKTAVNHPLGKNMIGTIYQPTSVIIDPNCLATLPRRELSSGLAEVIKYGILFDVNFFNWLELNIDALLGLEPHTVTWCIRRCCEIKAKIVTADEHEKGVRTLLNLGHTYGHAIETHMGYGNWLHGEAVAVGIMIVVQVSCSLGYFSNVDTERVKTLLLRAGLPVIGPMKISLEDYLPYIMRDKKTTNGILHIILPLKLGSAEVHTYRISEWQKLIAHLI.

NAD(+)-binding positions include aspartate 71–lysine 76, glycine 105–aspartate 109, threonine 129–threonine 130, lysine 142, lysine 151, and cysteine 169–threonine 172. Residues glutamate 184, histidine 247, and histidine 264 each coordinate Zn(2+).

The protein belongs to the sugar phosphate cyclases superfamily. Dehydroquinate synthase family. Co(2+) serves as cofactor. It depends on Zn(2+) as a cofactor. The cofactor is NAD(+).

It is found in the cytoplasm. It catalyses the reaction 7-phospho-2-dehydro-3-deoxy-D-arabino-heptonate = 3-dehydroquinate + phosphate. It participates in metabolic intermediate biosynthesis; chorismate biosynthesis; chorismate from D-erythrose 4-phosphate and phosphoenolpyruvate: step 2/7. Functionally, catalyzes the conversion of 3-deoxy-D-arabino-heptulosonate 7-phosphate (DAHP) to dehydroquinate (DHQ). In Baumannia cicadellinicola subsp. Homalodisca coagulata, this protein is 3-dehydroquinate synthase.